Reading from the N-terminus, the 168-residue chain is Peptide deformylase (168 aa).

Positions 92 and 134 each coordinate Fe cation. Residue E135 is part of the active site. Residue H138 coordinates Fe cation.

This sequence belongs to the polypeptide deformylase family. Fe(2+) serves as cofactor.

The enzyme catalyses N-terminal N-formyl-L-methionyl-[peptide] + H2O = N-terminal L-methionyl-[peptide] + formate. Functionally, removes the formyl group from the N-terminal Met of newly synthesized proteins. Requires at least a dipeptide for an efficient rate of reaction. N-terminal L-methionine is a prerequisite for activity but the enzyme has broad specificity at other positions. The polypeptide is Peptide deformylase (Azotobacter vinelandii (strain DJ / ATCC BAA-1303)).